Consider the following 48-residue polypeptide: Large ribosomal subunit protein bL36c (48 aa).

This sequence belongs to the bacterial ribosomal protein bL36 family.

The protein resides in the plastid. It localises to the chloroplast. The polypeptide is Large ribosomal subunit protein bL36c (Rhodomonas salina (Cryptomonas salina)).